The primary structure comprises 139 residues: Translation initiation factor 5A (139 aa).

Residue lysine 36 is modified to Hypusine.

It belongs to the eIF-5A family.

It localises to the cytoplasm. In terms of biological role, functions by promoting the formation of the first peptide bond. This Aeropyrum pernix (strain ATCC 700893 / DSM 11879 / JCM 9820 / NBRC 100138 / K1) protein is Translation initiation factor 5A (eif5a).